Reading from the N-terminus, the 778-residue chain is MNKKILETLEFDKIKALFEPHLLTEQGLEQLRQLAPTAKADKIKQAFAEMKEMQALFVEQPHFTILSTKEIAGVCKRLEMGADLNIEEFLLLKRVLLTSRELQSFYANLENVSLEELALWFEKLHDFPQLQGNLQAFNDAGFIENFASEELARIRRKIHDSESQVRDVLQDLLKQKAQMLTEGIVASRNGRQVLPVKNTYRNKIAGVVHDISASGNTVYIEPREVVKLSEEIASLRADERYEMLRILQEISERVRPHAAEIANDAWIIGHLDLIRAKVRFIQERQAVVPQLSENQEIQLLHVCHPLVKNAVANDVYFGQDLTAIVITGPNTGGKTIMLKTLGLTQVMAQSGLPILADKGSRVGIFEEIFADIGDEQSIEQSLSTFSSHMTNIVDILGKVNQHSLLLLDELGAGTDPQEGAALAMAILEDLRLRQIKTMATTHYPELKAYGIETAFVQNASMEFDTATLRPTYRFMQGVPGRSNAFEIAKRLGLSEVIVGDASQQIDQDNDVNRIIEQLEEQTLESRKRLDNIREVEQENLKMNRVLKKLYNELNREKETELNKAREQAAEIVDMALSESDQILKNLHSKSQLKPHEIIEAKAKLKKLAPEKVDLSKNKVLQKAKKKRAPKVGDDIVVLSYGQRGTLTSQLKDGRWEAQVGLIKMTLEEKEFDLVQAQQEKPVKKKQVNVVKRTSGRGPQARLDLRGKRYEEAMNELDTFIDQALLNNMAQVDIIHGIGTGVIREGVTKYLQRNKHVKSFGYAPQNAGGSGATIVTFKG.

328–335 (GPNTGGKT) is an ATP binding site. The Smr domain occupies 702-777 (LDLRGKRYEE…GSGATIVTFK (76 aa)).

This sequence belongs to the DNA mismatch repair MutS family. MutS2 subfamily. Homodimer. Binds to stalled ribosomes, contacting rRNA.

Functionally, endonuclease that is involved in the suppression of homologous recombination and thus may have a key role in the control of bacterial genetic diversity. Acts as a ribosome collision sensor, splitting the ribosome into its 2 subunits. Detects stalled/collided 70S ribosomes which it binds and splits by an ATP-hydrolysis driven conformational change. Acts upstream of the ribosome quality control system (RQC), a ribosome-associated complex that mediates the extraction of incompletely synthesized nascent chains from stalled ribosomes and their subsequent degradation. Probably generates substrates for RQC. The protein is Endonuclease MutS2 of Streptococcus pneumoniae (strain 70585).